An 834-amino-acid polypeptide reads, in one-letter code: 5-hydroxytryptamine receptor 2A (834 aa).

Residues methionine 1–serine 230 are Extracellular-facing. Positions threonine 56–serine 75 are disordered. Residues asparagine 68, asparagine 97, asparagine 161, asparagine 175, asparagine 183, asparagine 194, asparagine 203, and asparagine 209 are each glycosylated (N-linked (GlcNAc...) asparagine). A helical membrane pass occupies residues valine 231 to leucine 253. The Cytoplasmic portion of the chain corresponds to glutamate 254–tyrosine 263. Residues leucine 264 to valine 285 form a helical membrane-spanning segment. At tyrosine 286 to aspartate 300 the chain is on the extracellular side. Cysteines 299 and 378 form a disulfide. The helical transmembrane segment at isoleucine 301–valine 322 threads the bilayer. At aspartate 323–arginine 341 the chain is on the cytoplasmic side. A helical transmembrane segment spans residues valine 342–tryptophan 364. Over lysine 365–threonine 391 the chain is Extracellular. Residues cysteine 392–alanine 413 form a helical membrane-spanning segment. Residues arginine 414 to threonine 752 lie on the Cytoplasmic side of the membrane. Disordered regions lie at residues arginine 420 to threonine 442, lysine 460 to glycine 516, glutamine 531 to glutamine 599, leucine 617 to alanine 640, and serine 674 to alanine 743. 2 stretches are compositionally biased toward polar residues: residues glycine 482–aspartate 502 and glutamine 532–alanine 542. Basic and acidic residues predominate over residues arginine 551–glutamine 564. Positions glutamate 565–glutamate 575 are enriched in acidic residues. Low complexity predominate over residues threonine 582 to threonine 593. Over residues serine 674–serine 694 the composition is skewed to polar residues. Residues glutamine 702–glutamine 723 are compositionally biased toward low complexity. A helical membrane pass occupies residues leucine 753–leucine 776. Residues cysteine 777–serine 785 are Extracellular-facing. Residues valine 786–phenylalanine 808 form a helical membrane-spanning segment. Residues serine 809–leucine 834 lie on the Cytoplasmic side of the membrane.

The protein belongs to the G-protein coupled receptor 1 family.

Its subcellular location is the cell membrane. Functionally, this is one of the several different receptors for 5-hydroxytryptamine (serotonin), a biogenic hormone that functions as a neurotransmitter, a hormone, and a mitogen. The activity of this receptor is mediated by G proteins which inhibit adenylate cyclase. This chain is 5-hydroxytryptamine receptor 2A (5-HT1A), found in Drosophila melanogaster (Fruit fly).